A 503-amino-acid polypeptide reads, in one-letter code: Probable cytosol aminopeptidase (503 aa).

Residues Lys-274 and Asp-279 each contribute to the Mn(2+) site. Lys-286 is an active-site residue. Mn(2+) is bound by residues Asp-297, Asp-356, and Glu-358. Residue Arg-360 is part of the active site.

Belongs to the peptidase M17 family. Requires Mn(2+) as cofactor.

The protein localises to the cytoplasm. It catalyses the reaction Release of an N-terminal amino acid, Xaa-|-Yaa-, in which Xaa is preferably Leu, but may be other amino acids including Pro although not Arg or Lys, and Yaa may be Pro. Amino acid amides and methyl esters are also readily hydrolyzed, but rates on arylamides are exceedingly low.. It carries out the reaction Release of an N-terminal amino acid, preferentially leucine, but not glutamic or aspartic acids.. In terms of biological role, presumably involved in the processing and regular turnover of intracellular proteins. Catalyzes the removal of unsubstituted N-terminal amino acids from various peptides. This is Probable cytosol aminopeptidase from Paraburkholderia phymatum (strain DSM 17167 / CIP 108236 / LMG 21445 / STM815) (Burkholderia phymatum).